Here is a 933-residue protein sequence, read N- to C-terminus: Protein translocase subunit SecA (933 aa).

ATP-binding positions include Q90, 108–112 (GEGKT), and D504. Residues 539–570 (GMGSNNRRPQGFGQDSKKKKWQPSADIFPTDL) form a disordered region.

This sequence belongs to the SecA family. Monomer and homodimer. Part of the essential Sec protein translocation apparatus which comprises SecA, SecYEG and auxiliary proteins SecDF. Other proteins may also be involved.

The protein resides in the cell inner membrane. It localises to the cellular thylakoid membrane. Its subcellular location is the cytoplasm. The catalysed reaction is ATP + H2O + cellular proteinSide 1 = ADP + phosphate + cellular proteinSide 2.. Part of the Sec protein translocase complex. Interacts with the SecYEG preprotein conducting channel. Has a central role in coupling the hydrolysis of ATP to the transfer of proteins into and across the cell membrane, serving as an ATP-driven molecular motor driving the stepwise translocation of polypeptide chains across the membrane. Its function is as follows. Probably participates in protein translocation into and across both the cytoplasmic and thylakoid membranes in cyanobacterial cells. The protein is Protein translocase subunit SecA of Crocosphaera subtropica (strain ATCC 51142 / BH68) (Cyanothece sp. (strain ATCC 51142)).